Reading from the N-terminus, the 721-residue chain is Polyribonucleotide nucleotidyltransferase (721 aa).

D511 and D517 together coordinate Mg(2+). Residues 577-637 (PSTDFFHINP…SGVQAAREHI (61 aa)) enclose the KH domain. In terms of domain architecture, S1 motif spans 654-721 (GDIHKGIVKK…KGNKISLGIA (68 aa)).

Belongs to the polyribonucleotide nucleotidyltransferase family. Mg(2+) serves as cofactor.

The protein localises to the cytoplasm. It catalyses the reaction RNA(n+1) + phosphate = RNA(n) + a ribonucleoside 5'-diphosphate. In terms of biological role, involved in mRNA degradation. Catalyzes the phosphorolysis of single-stranded polyribonucleotides processively in the 3'- to 5'-direction. In Sulfurimonas denitrificans (strain ATCC 33889 / DSM 1251) (Thiomicrospira denitrificans (strain ATCC 33889 / DSM 1251)), this protein is Polyribonucleotide nucleotidyltransferase.